The sequence spans 440 residues: MSSYSQLFAQHLDTLQQRTRDILQQQGLSGLAIHSGQTHRIFLDDQDYPFKVNPQFKAWLPVLDNPHCWLLVDGVNKPVLLFYRPVDFWHKVAELPNAFWVDFFDIRFLTRPEQVADHLPANKQEWAYLGGHLEVAELLGLGQPNPEAVLNYLHYHRAYKTAYELECLRDANRIGVRGHIAAKDSFMAGASEFEINLAYMKAVGQGANEAPYGNIVAINRNAAILHYTHLSAQRVPDAERYSFLIDAGVDVHGYASDITRTWAWRRGEFADLIAALDAQQQEIIEEIKPGRRYSELHLQMHHRLARLLQATELVDMSVDEMIHTGVTNVFFPHGLGHFLGLQVHDAGGFMQDERGTHLSAPEQFPYLRCTRVMEVGQVFTIEPGLYFIDSLLEPLRLGEQGKRVNWNKVEALRPYGGIRIEDNVVLHANGVENLTRQAGL.

Mn(2+) is bound by residues Asp246, Asp257, His337, Glu382, and Glu421.

This sequence belongs to the peptidase M24B family. Bacterial-type prolidase subfamily. The cofactor is Mn(2+).

The enzyme catalyses Xaa-L-Pro dipeptide + H2O = an L-alpha-amino acid + L-proline. Its function is as follows. Splits dipeptides with a prolyl residue in the C-terminal position. The chain is Xaa-Pro dipeptidase from Aeromonas hydrophila subsp. hydrophila (strain ATCC 7966 / DSM 30187 / BCRC 13018 / CCUG 14551 / JCM 1027 / KCTC 2358 / NCIMB 9240 / NCTC 8049).